Reading from the N-terminus, the 422-residue chain is Histidine--tRNA ligase (422 aa).

Belongs to the class-II aminoacyl-tRNA synthetase family. In terms of assembly, homodimer.

The protein localises to the cytoplasm. It carries out the reaction tRNA(His) + L-histidine + ATP = L-histidyl-tRNA(His) + AMP + diphosphate + H(+). The polypeptide is Histidine--tRNA ligase (hisS) (Photobacterium profundum (strain SS9)).